Consider the following 157-residue polypeptide: MRIGNGYDVHRLAPGQKLVLGGVEIPFECGLIGWSDADVLTHAIMDSLLGAAALGDIGLYFPPGDPKYKGISSLKLLEQVTDLLAKKGFGIINVDSVIVAEEPKLRGHIDTMRKHLAKAMGIDPGRVGIKASTSEQLGFVGRQEGMVAWAVALVDEK.

A divalent metal cation-binding residues include Asp8, His10, and His42. Residue 8–10 (DVH) participates in 4-CDP-2-C-methyl-D-erythritol 2-phosphate binding. Residues 56 to 58 (DIG), 132 to 135 (STSE), Phe139, and Arg142 each bind 4-CDP-2-C-methyl-D-erythritol 2-phosphate.

This sequence belongs to the IspF family. In terms of assembly, homotrimer. It depends on a divalent metal cation as a cofactor.

It catalyses the reaction 4-CDP-2-C-methyl-D-erythritol 2-phosphate = 2-C-methyl-D-erythritol 2,4-cyclic diphosphate + CMP. It participates in isoprenoid biosynthesis; isopentenyl diphosphate biosynthesis via DXP pathway; isopentenyl diphosphate from 1-deoxy-D-xylulose 5-phosphate: step 4/6. Involved in the biosynthesis of isopentenyl diphosphate (IPP) and dimethylallyl diphosphate (DMAPP), two major building blocks of isoprenoid compounds. Catalyzes the conversion of 4-diphosphocytidyl-2-C-methyl-D-erythritol 2-phosphate (CDP-ME2P) to 2-C-methyl-D-erythritol 2,4-cyclodiphosphate (ME-CPP) with a corresponding release of cytidine 5-monophosphate (CMP). The chain is 2-C-methyl-D-erythritol 2,4-cyclodiphosphate synthase from Dehalococcoides mccartyi (strain CBDB1).